The chain runs to 179 residues: ATP synthase subunit delta 1 (179 aa).

The protein belongs to the ATPase delta chain family. F-type ATPases have 2 components, F(1) - the catalytic core - and F(0) - the membrane proton channel. F(1) has five subunits: alpha(3), beta(3), gamma(1), delta(1), epsilon(1). F(0) has three main subunits: a(1), b(2) and c(10-14). The alpha and beta chains form an alternating ring which encloses part of the gamma chain. F(1) is attached to F(0) by a central stalk formed by the gamma and epsilon chains, while a peripheral stalk is formed by the delta and b chains.

The protein resides in the cell inner membrane. In terms of biological role, f(1)F(0) ATP synthase produces ATP from ADP in the presence of a proton or sodium gradient. F-type ATPases consist of two structural domains, F(1) containing the extramembraneous catalytic core and F(0) containing the membrane proton channel, linked together by a central stalk and a peripheral stalk. During catalysis, ATP synthesis in the catalytic domain of F(1) is coupled via a rotary mechanism of the central stalk subunits to proton translocation. This protein is part of the stalk that links CF(0) to CF(1). It either transmits conformational changes from CF(0) to CF(1) or is implicated in proton conduction. In Syntrophotalea carbinolica (strain DSM 2380 / NBRC 103641 / GraBd1) (Pelobacter carbinolicus), this protein is ATP synthase subunit delta 1.